The primary structure comprises 76 residues: Small ribosomal subunit protein bS16c (76 aa).

This sequence belongs to the bacterial ribosomal protein bS16 family.

The protein localises to the plastid. Its subcellular location is the chloroplast. The chain is Small ribosomal subunit protein bS16c from Guillardia theta (Cryptophyte).